Here is a 346-residue protein sequence, read N- to C-terminus: Glucose-6-phosphatase 3 (346 aa).

Topologically, residues 1–24 are lumenal; the sequence is MESTLGAGIAMAEALQNQLPWLEN. Residues 25 to 45 traverse the membrane as a helical segment; the sequence is VWLWVTFLGDPKSLFLFYFPA. The Cytoplasmic segment spans residues 46–54; the sequence is AYYASRRVG. A helical transmembrane segment spans residues 55-75; sequence IAVLWISLITEWLNLVFKWFL. The Lumenal portion of the chain corresponds to 76–108; it reads FGDRPFWWVHESGYYSQAPAQVHQFPSSCETGP. Substrate is bound at residue arginine 79. A helical transmembrane segment spans residues 109–129; that stretch reads GSPSGHCMITGAALWPIMTAV. Catalysis depends on histidine 114, which acts as the Proton donor. Over 130 to 140 the chain is Cytoplasmic; it reads SSQMATRAHSR. A helical membrane pass occupies residues 141–162; that stretch reads WVRVIPSLAYCTFLLAVGLSRV. Residue arginine 161 coordinates substrate. The Lumenal segment spans residues 163–167; sequence FLLAH. Histidine 167 functions as the Nucleophile in the catalytic mechanism. The helical transmembrane segment at 168–186 threads the bilayer; sequence FPHQVLAGLITGAVLGWLM. Topologically, residues 187 to 197 are cytoplasmic; it reads TPQVPMERELS. A helical transmembrane segment spans residues 198 to 218; it reads FYGLTSLALLLGASLIYWTLF. At 219 to 254 the chain is on the lumenal side; the sequence is TLGLDLSWSINLASKWCERPEWVHLDSRPFASLSRD. A helical membrane pass occupies residues 255–273; that stretch reads SGAALGLGIALHSPCYAQV. Topologically, residues 274–283 are cytoplasmic; that stretch reads RRAHLGYGQK. The chain crosses the membrane as a helical span at residues 284–304; that stretch reads LVCLVLAMGLLGPLNWLGYPP. Residues 305–307 lie on the Lumenal side of the membrane; it reads QIS. A helical transmembrane segment spans residues 308–328; that stretch reads LFYIFNFLKYTLWPCLVLALV. The Cytoplasmic portion of the chain corresponds to 329 to 346; sequence PWLVHMFSAQEAPPIRSS.

The protein belongs to the glucose-6-phosphatase family.

The protein resides in the endoplasmic reticulum membrane. It carries out the reaction D-glucose 6-phosphate + H2O = D-glucose + phosphate. It participates in carbohydrate biosynthesis; gluconeogenesis. Inhibited by vanadate. Functionally, hydrolyzes glucose-6-phosphate to glucose in the endoplasmic reticulum. May form with the glucose-6-phosphate transporter (SLC37A4/G6PT) a ubiquitously expressed complex responsible for glucose production through glycogenolysis and gluconeogenesis. Probably required for normal neutrophil function. This chain is Glucose-6-phosphatase 3 (G6PC3), found in Bos taurus (Bovine).